Reading from the N-terminus, the 275-residue chain is Holocytochrome c-type synthase (275 aa).

Disordered stretches follow at residues 1 to 59 and 83 to 102; these read MGLS…KTNS and KENL…PAPD. A lipid anchor (N-myristoyl glycine) is attached at Gly-2. The span at 9 to 28 shows a compositional bias: polar residues; the sequence is AASTVQTSTPAASDHQTAAP. 2 HRM repeats span residues 31-36 and 41-46; these read GCPMHE and GCPVSA. Residues 48–59 show a composition bias toward polar residues; sequence PSDSTCGSKTNS. Residues 91–102 are compositionally biased toward pro residues; the sequence is LMPPPNQTPAPD.

It belongs to the cytochrome c-type heme lyase family.

It localises to the mitochondrion inner membrane. It is found in the membrane. It carries out the reaction holo-[cytochrome c] = apo-[cytochrome c] + heme b. Functionally, lyase that catalyzes the covalent linking of the heme group to the cytochrome C apoprotein to produce the mature functional cytochrome. This chain is Holocytochrome c-type synthase, found in Bos taurus (Bovine).